We begin with the raw amino-acid sequence, 1297 residues long: DNA-directed RNA polymerase subunit beta' (1297 aa).

Cysteine 60, cysteine 62, cysteine 75, and cysteine 78 together coordinate Zn(2+). Positions 535, 537, and 539 each coordinate Mg(2+). 4 residues coordinate Zn(2+): cysteine 883, cysteine 961, cysteine 968, and cysteine 971.

It belongs to the RNA polymerase beta' chain family. As to quaternary structure, the RNAP catalytic core consists of 2 alpha, 1 beta, 1 beta' and 1 omega subunit. When a sigma factor is associated with the core the holoenzyme is formed, which can initiate transcription. Requires Mg(2+) as cofactor. It depends on Zn(2+) as a cofactor.

It carries out the reaction RNA(n) + a ribonucleoside 5'-triphosphate = RNA(n+1) + diphosphate. Functionally, DNA-dependent RNA polymerase catalyzes the transcription of DNA into RNA using the four ribonucleoside triphosphates as substrates. The chain is DNA-directed RNA polymerase subunit beta' from Salinispora arenicola (strain CNS-205).